Here is a 370-residue protein sequence, read N- to C-terminus: Ubiquitin carboxyl-terminal hydrolase 12 (370 aa).

The Required for plasma membrane localization of USP12/WDR20 signature appears at 1 to 4 (MEIL). Residues 39–369 (FGLVNFGNTC…SGYILFYQSR (331 aa)) form the USP domain. Residue cysteine 48 is the Nucleophile of the active site. A compositionally biased stretch (basic and acidic residues) spans 146–157 (QEKQNGRLRNGD). Residues 146–168 (QEKQNGRLRNGDVDSEDNNSTPD) are disordered. Residues cysteine 186, cysteine 189, cysteine 233, and cysteine 236 each contribute to the Zn(2+) site. Histidine 317 functions as the Proton acceptor in the catalytic mechanism.

The protein belongs to the peptidase C19 family. USP12/USP46 subfamily. Interacts with WDR48. Interacts with WDR20; this interaction promotes translocation of the USP12 complex to the plasma membrane. Component of the USP12-WDR20-WDR48 deubiquitinating complex. Component of the USP12-DMWD-WDR48 deubiquitinating complex. Interacts with PHLPP1. Interacts with RBPJ. Interacts with CBP; this interaction blocks the acetyltransferase activity of CREBBP. Interacts with ITCH; the interaction is more efficient when both USP12 and WDR48/UAF1 are involved and may mediate recruitment of the USP12 deubiquitinating complex to Notch.

The protein resides in the nucleus. Its subcellular location is the cytoplasm. It is found in the cell membrane. The enzyme catalyses Thiol-dependent hydrolysis of ester, thioester, amide, peptide and isopeptide bonds formed by the C-terminal Gly of ubiquitin (a 76-residue protein attached to proteins as an intracellular targeting signal).. Its activity is regulated as follows. Activated by interaction with WDR20, WDR48 and DMWD through different allosteric mechanisms. In terms of biological role, deubiquitinating enzyme that plays various roles in the regulation of the immune response and inflammation. During TCR engagement and activation, translocates into the cytoplasm and deubiquitinates its substrates LAT and TRAT1 and prevents their lysosome-dependent degradation to stabilize the TCR signaling complex at the plasma membrane. Plays an essential role in the selective LPS-induced macrophage response through the activation of NF-kappa-B pathway. In addition, promotes that antiviral immune response through targeting DNA sensor IFI16 to inhibit its proteasome-dependent degradation. Participates in the interferon signaling pathway and antiviral response independently of its deubiquitinase activity by maintaining nuclear phosphorylated STAT1 levels via inhibition of its CREBBP-mediated acetylation and subsequent dephosphorylation. Plays an intrinsic role in promoting the differentiation, activation and proliferation of CD4(+) T-cell by activating the NF-kappa-B signaling pathway through deubiquitinating and stabilizing B-cell lymphoma/leukemia 10/BCL10. In myeloid-derived suppressor cells promotes the activation of the NF-kappa-B via deubiquitination and stabilization of RELA. Regulates the 'Lys-63'-linked polyubiquitin chains of BAX and thereby modulates the mitochondrial apoptotic process. Negative regulator of NOTCH signaling that specifically deubiquitinates non-activated NOTCH receptors to target them for lysosomal degradation; deubiquitination of NOTCH stimulates its transport form late endosomes to lysosomes. Protects neurons against HTT/huntingtin-induced polyglutamine expansion-dependent neurodegeneration through regulation of autophagic flux. This function is independent of deubiquitinase activity or of other components of the USP12-WDR20-WDR48 deubiquitinating complex. In complex with WDR48, acts as a potential tumor suppressor by positively regulating PHLPP1 stability. In Rattus norvegicus (Rat), this protein is Ubiquitin carboxyl-terminal hydrolase 12.